We begin with the raw amino-acid sequence, 450 residues long: ATP-dependent protease ATPase subunit HslU (450 aa).

ATP-binding positions include Val29, 71–76 (GVGKTE), Asp261, Glu328, and Arg400.

It belongs to the ClpX chaperone family. HslU subfamily. A double ring-shaped homohexamer of HslV is capped on each side by a ring-shaped HslU homohexamer. The assembly of the HslU/HslV complex is dependent on binding of ATP.

The protein localises to the cytoplasm. ATPase subunit of a proteasome-like degradation complex; this subunit has chaperone activity. The binding of ATP and its subsequent hydrolysis by HslU are essential for unfolding of protein substrates subsequently hydrolyzed by HslV. HslU recognizes the N-terminal part of its protein substrates and unfolds these before they are guided to HslV for hydrolysis. The chain is ATP-dependent protease ATPase subunit HslU from Rickettsia felis (strain ATCC VR-1525 / URRWXCal2) (Rickettsia azadi).